Reading from the N-terminus, the 325-residue chain is Proto-oncogene Mas (325 aa).

The Extracellular segment spans residues 1–36 (MDGSNVTSFVVEEPTNISTGRNASVGNAHRQIPIVH). Residues Asn5, Asn16, and Asn22 are each glycosylated (N-linked (GlcNAc...) asparagine). The helical transmembrane segment at 37 to 61 (WVIMSISPVGFVENGILLWFLCFRM) threads the bilayer. Over 62-65 (RRNP) the chain is Cytoplasmic. Residues 66–86 (FTVYITHLSIADISLLFCIFI) form a helical membrane-spanning segment. Residues 87–104 (LSIDYALDYELSSGHYYT) are Extracellular-facing. Residues 105–128 (IVTLSVTFLFGYNTGLYLLTAISV) form a helical membrane-spanning segment. Residues 129–149 (ERCLSVLYPIWYRCHRPKYQS) are Cytoplasmic-facing. Residues 150–172 (ALVCALLWALSCLVTTMEYVMCI) traverse the membrane as a helical segment. The Extracellular portion of the chain corresponds to 173-185 (DREEESHSRNDCR). The helical transmembrane segment at 186-206 (AVIIFIAILSFLVFTPLMLVS) threads the bilayer. Over 207–224 (STILVVKIRKNTWASHSS) the chain is Cytoplasmic. Residues 225 to 245 (KLYIVIMVTIIIFLIFAMPMR) traverse the membrane as a helical segment. Residues 246–263 (LLYLLYYEYWSTFGNLHH) are Extracellular-facing. The chain crosses the membrane as a helical span at residues 264–284 (ISLLFSTINSSANPFIYFFVG). At 285–325 (SSKKKRFKESLKVVLTRAFKDEMQPRRQKDNCNTVTVETVV) the chain is on the cytoplasmic side.

It belongs to the G-protein coupled receptor 1 family. Interacts with AGTR1. Interacts with FLNA (via filamin repeat 21); increases PKA-mediated phosphorylation of FLNA.

The protein resides in the cell membrane. Functionally, receptor for angiotensin 1-7. Acts specifically as a functional antagonist of AGTR1 (angiotensin-2 type 1 receptor), although it up-regulates AGTR1 receptor levels. Positive regulation of AGTR1 levels occurs through activation of the G-proteins GNA11 and GNAQ, and stimulation of the protein kinase C signaling cascade. The antagonist effect on AGTR1 function is probably due to AGTR1 being physically altered by MAS1. This Homo sapiens (Human) protein is Proto-oncogene Mas (MAS1).